Consider the following 434-residue polypeptide: Homogentisate 1,2-dioxygenase (434 aa).

H289 serves as the catalytic Proton acceptor. Residues H332 and E338 each contribute to the Fe cation site. Residues Y347 and H368 each contribute to the homogentisate site. H368 contributes to the Fe cation binding site.

This sequence belongs to the homogentisate dioxygenase family. Hexamer; dimer of trimers. The cofactor is Fe cation.

The catalysed reaction is homogentisate + O2 = 4-maleylacetoacetate + H(+). Its pathway is amino-acid degradation; L-phenylalanine degradation; acetoacetate and fumarate from L-phenylalanine: step 4/6. Its function is as follows. Involved in the catabolism of homogentisate (2,5-dihydroxyphenylacetate or 2,5-OH-PhAc), a central intermediate in the degradation of phenylalanine and tyrosine. Catalyzes the oxidative ring cleavage of the aromatic ring of homogentisate to yield maleylacetoacetate. The chain is Homogentisate 1,2-dioxygenase from Pseudomonas syringae pv. syringae (strain B728a).